A 397-amino-acid polypeptide reads, in one-letter code: Argininosuccinate synthase (397 aa).

A8–S16 lines the ATP pocket. Residues Y86 and S91 each contribute to the L-citrulline site. Residue G116 coordinates ATP. The L-aspartate site is built by T118, N122, and D123. Position 122 (N122) interacts with L-citrulline. The L-citrulline site is built by R126, S175, S184, E260, and Y272.

Belongs to the argininosuccinate synthase family. Type 1 subfamily. As to quaternary structure, homotetramer.

It localises to the cytoplasm. It carries out the reaction L-citrulline + L-aspartate + ATP = 2-(N(omega)-L-arginino)succinate + AMP + diphosphate + H(+). It participates in amino-acid biosynthesis; L-arginine biosynthesis; L-arginine from L-ornithine and carbamoyl phosphate: step 2/3. The protein is Argininosuccinate synthase of Clostridium botulinum (strain ATCC 19397 / Type A).